The primary structure comprises 251 residues: Triosephosphate isomerase (251 aa).

Substrate is bound at residue 9–11; that stretch reads NWK. Residue His95 is the Electrophile of the active site. Catalysis depends on Glu167, which acts as the Proton acceptor. Residues Gly173, Ser212, and 233 to 234 contribute to the substrate site; that span reads GG.

This sequence belongs to the triosephosphate isomerase family. In terms of assembly, homodimer.

It localises to the cytoplasm. The enzyme catalyses D-glyceraldehyde 3-phosphate = dihydroxyacetone phosphate. The protein operates within carbohydrate biosynthesis; gluconeogenesis. It functions in the pathway carbohydrate degradation; glycolysis; D-glyceraldehyde 3-phosphate from glycerone phosphate: step 1/1. Involved in the gluconeogenesis. Catalyzes stereospecifically the conversion of dihydroxyacetone phosphate (DHAP) to D-glyceraldehyde-3-phosphate (G3P). The protein is Triosephosphate isomerase of Pseudomonas entomophila (strain L48).